The chain runs to 202 residues: uncharacterized protein (202 aa).

This is an uncharacterized protein from Bacillus anthracis.